The primary structure comprises 141 residues: MVARTIATFAGSTALTIKPFLVNLPVVICLAAYLVSQVFCLAGFCPDYLAELHLCTFFTFFTSFLLVPLAIFTLRKDGNFLRKRAVFTSYSCVYPPFRLGNPTCFYSYHWFLIHIPESLWLVNNGFGLRATCRLSSRRSQR.

2 helical membrane passes run 20–42 and 52–74; these read FLVNLPVVICLAAYLVSQVFCLA and LHLCTFFTFFTSFLLVPLAIFTL.

The protein resides in the cell membrane. This is an uncharacterized protein from Archaeoglobus fulgidus (strain ATCC 49558 / DSM 4304 / JCM 9628 / NBRC 100126 / VC-16).